Here is a 162-residue protein sequence, read N- to C-terminus: Nucleotide-binding protein AnaeK_0101 (162 aa).

Belongs to the YajQ family.

Its function is as follows. Nucleotide-binding protein. This Anaeromyxobacter sp. (strain K) protein is Nucleotide-binding protein AnaeK_0101.